Here is a 464-residue protein sequence, read N- to C-terminus: ATP synthase subunit beta (464 aa).

152–159 (GGAGVGKT) provides a ligand contact to ATP.

The protein belongs to the ATPase alpha/beta chains family. As to quaternary structure, F-type ATPases have 2 components, CF(1) - the catalytic core - and CF(0) - the membrane proton channel. CF(1) has five subunits: alpha(3), beta(3), gamma(1), delta(1), epsilon(1). CF(0) has three main subunits: a(1), b(2) and c(9-12). The alpha and beta chains form an alternating ring which encloses part of the gamma chain. CF(1) is attached to CF(0) by a central stalk formed by the gamma and epsilon chains, while a peripheral stalk is formed by the delta and b chains.

The protein localises to the cell membrane. It catalyses the reaction ATP + H2O + 4 H(+)(in) = ADP + phosphate + 5 H(+)(out). Produces ATP from ADP in the presence of a proton gradient across the membrane. The catalytic sites are hosted primarily by the beta subunits. The protein is ATP synthase subunit beta of Clostridioides difficile (strain 630) (Peptoclostridium difficile).